Consider the following 458-residue polypeptide: Bifunctional protein GlmU (458 aa).

Positions 1–229 (MKEKALSIVI…FMEVEGVNNR (229 aa)) are pyrophosphorylase. UDP-N-acetyl-alpha-D-glucosamine-binding positions include 11-14 (LAAG), K25, Q76, 81-82 (GT), 103-105 (YGD), G140, E154, N169, and N227. Residue D105 coordinates Mg(2+). Position 227 (N227) interacts with Mg(2+). The segment at 230 to 250 (QQLARLERYYQRKQADNLLLA) is linker. The segment at 251 to 458 (GVALADPERF…WQRPTKQTKK (208 aa)) is N-acetyltransferase. Residues R333 and K351 each coordinate UDP-N-acetyl-alpha-D-glucosamine. Catalysis depends on H363, which acts as the Proton acceptor. 2 residues coordinate UDP-N-acetyl-alpha-D-glucosamine: Y366 and N377. Acetyl-CoA contacts are provided by residues A380, 386-387 (NY), S405, A423, and R440.

In the N-terminal section; belongs to the N-acetylglucosamine-1-phosphate uridyltransferase family. It in the C-terminal section; belongs to the transferase hexapeptide repeat family. Homotrimer. The cofactor is Mg(2+).

The protein localises to the cytoplasm. The catalysed reaction is alpha-D-glucosamine 1-phosphate + acetyl-CoA = N-acetyl-alpha-D-glucosamine 1-phosphate + CoA + H(+). The enzyme catalyses N-acetyl-alpha-D-glucosamine 1-phosphate + UTP + H(+) = UDP-N-acetyl-alpha-D-glucosamine + diphosphate. It participates in nucleotide-sugar biosynthesis; UDP-N-acetyl-alpha-D-glucosamine biosynthesis; N-acetyl-alpha-D-glucosamine 1-phosphate from alpha-D-glucosamine 6-phosphate (route II): step 2/2. It functions in the pathway nucleotide-sugar biosynthesis; UDP-N-acetyl-alpha-D-glucosamine biosynthesis; UDP-N-acetyl-alpha-D-glucosamine from N-acetyl-alpha-D-glucosamine 1-phosphate: step 1/1. The protein operates within bacterial outer membrane biogenesis; LPS lipid A biosynthesis. In terms of biological role, catalyzes the last two sequential reactions in the de novo biosynthetic pathway for UDP-N-acetylglucosamine (UDP-GlcNAc). The C-terminal domain catalyzes the transfer of acetyl group from acetyl coenzyme A to glucosamine-1-phosphate (GlcN-1-P) to produce N-acetylglucosamine-1-phosphate (GlcNAc-1-P), which is converted into UDP-GlcNAc by the transfer of uridine 5-monophosphate (from uridine 5-triphosphate), a reaction catalyzed by the N-terminal domain. The polypeptide is Bifunctional protein GlmU (Pasteurella multocida (strain Pm70)).